A 1778-amino-acid chain; its full sequence is Internalin I (1778 aa).

The first 28 residues, 1 to 28 (MKKKFSIVIISVLLLGYLAPFDTLLVGA), serve as a signal peptide directing secretion. Positions 36 to 101 (DTAVKTAEAD…NIKTEINTDK (66 aa)) are disordered. Residues 51–62 (IESETGSDDETA) are compositionally biased toward acidic residues. Residues 63–88 (EEPKEAKEAEASKETTEKEEKAKTEE) are compositionally biased toward basic and acidic residues. LRR repeat units follow at residues 155–179 (AISQ…EGLQ), 183–204 (NLTS…KDLV), 205–227 (NLVS…EDLV), 228–250 (NLQE…ASLP), 251–272 (VLKE…NPAG), 277–298 (ELET…AKLP), 299–321 (KLKN…NGAT), 322–344 (KLQL…SGLS), 345–367 (ELEM…KNLP), 368–389 (NLVN…NNLP), 390–412 (KLQT…TDLP), 413–434 (QLKT…DNLP), 435–456 (KLEK…TDLP), 457–478 (RLSY…KKLP), 479–500 (LLEW…TNFP), 501–522 (SLNY…TELP), 523–544 (SLKE…HDMP), 545–566 (NLRK…DNLP), 567–588 (KLQS…HDLP), 589–610 (SLET…DNLP), 611–632 (DLTY…GDLP), 633–653 (NLET…GTMD), 657–678 (KLRI…GNLS), 685–707 (NLTE…STLS), 708–729 (RLIY…SNLT), 730–751 (NLQE…SDLE), and 752–773 (NLNK…ANMV). Positions 785 to 872 (TYTLPTVLSY…SAAKVTADAE (88 aa)) constitute an LRRCT domain. MucBP domains are found at residues 1510–1569 (DAAA…EQTV), 1575–1634 (AIKP…PQTI), and 1644–1705 (SKKS…SQTV). Residues 1716–1742 (SKDDPKVKGKTNQPSSTDTKLKVDNNS) are disordered. The segment covering 1725 to 1742 (KTNQPSSTDTKLKVDNNS) has biased composition (polar residues). An LPXTG sorting signal motif is present at residues 1743-1747 (LPATG). Pentaglycyl murein peptidoglycan amidated threonine is present on threonine 1746. Residues 1747-1778 (GDTENMILAVLIGFNMLIVASIFLFRKPKTNQ) constitute a propeptide, removed by sortase.

It belongs to the internalin family.

The protein localises to the secreted. Its subcellular location is the cell wall. Functionally, a role in virulence could not be demonstrated. The polypeptide is Internalin I (inlI) (Listeria monocytogenes serovar 1/2a (strain ATCC BAA-679 / EGD-e)).